The sequence spans 286 residues: 4-hydroxybenzoate octaprenyltransferase (286 aa).

Helical transmembrane passes span 22–42, 45–65, 98–118, 143–163, 213–233, 238–255, and 266–286; these read IGTL…EKAM, LSVL…GCVI, LFIV…LYTI, FFLG…TIEA, IIAL…YLSQ, YFIV…QCRL, and NAFL…LFGI.

The protein belongs to the UbiA prenyltransferase family. Requires Mg(2+) as cofactor.

Its subcellular location is the cell inner membrane. It carries out the reaction all-trans-octaprenyl diphosphate + 4-hydroxybenzoate = 4-hydroxy-3-(all-trans-octaprenyl)benzoate + diphosphate. It participates in cofactor biosynthesis; ubiquinone biosynthesis. Its function is as follows. Catalyzes the prenylation of para-hydroxybenzoate (PHB) with an all-trans polyprenyl group. Mediates the second step in the final reaction sequence of ubiquinone-8 (UQ-8) biosynthesis, which is the condensation of the polyisoprenoid side chain with PHB, generating the first membrane-bound Q intermediate 3-octaprenyl-4-hydroxybenzoate. In Histophilus somni (strain 129Pt) (Haemophilus somnus), this protein is 4-hydroxybenzoate octaprenyltransferase.